We begin with the raw amino-acid sequence, 353 residues long: Rhodopsin (353 aa).

At 1-36 (MNGTEGPYFYIPMVNTTGIVRSPYEYPQYYLVNPAA) the chain is on the extracellular side. 2 N-linked (GlcNAc...) asparagine glycosylation sites follow: N2 and N15. A helical transmembrane segment spans residues 37–61 (YAALGAYMFLLILLGFPINFLTLYV). Residues 62–73 (TIEHKKLRTPLN) lie on the Cytoplasmic side of the membrane. Residues 74–96 (YILLNLAVANLFMVFGGFTTTMY) traverse the membrane as a helical segment. Over 97–110 (TSMHGYFVLGRLGC) the chain is Extracellular. C110 and C187 form a disulfide bridge. The chain crosses the membrane as a helical span at residues 111–133 (NLEGFFATLGGEIALWSLVVLAV). Residues 134 to 136 (ERW) carry the 'Ionic lock' involved in activated form stabilization motif. Topologically, residues 134–152 (ERWMVVCKPISNFRFGENH) are cytoplasmic. The helical transmembrane segment at 153 to 173 (AIMGLAFTWVMASACAVPPLV) threads the bilayer. At 174–202 (GWSRYIPEGMQCSCGIDYYTRAEGFNNES) the chain is on the extracellular side. N-linked (GlcNAc...) asparagine glycosylation is present at N200. Residues 203 to 224 (FVIYMFVCHFLIPLVVVFFCYG) traverse the membrane as a helical segment. At 225–252 (RLLCAVKEAAAAQQESETTQRAEREVSR) the chain is on the cytoplasmic side. Residues 253–274 (MVVIMVVAFLICWCPYAGVAWY) form a helical membrane-spanning segment. At 275–286 (IFTHQGSEFGPL) the chain is on the extracellular side. The chain crosses the membrane as a helical span at residues 287–308 (FMTFPAFFAKSSSIYNPMIYIC). K296 is subject to N6-(retinylidene)lysine. Over 309-353 (MNKQFRHCMITTLCCGKNPFEEEEGASTTSKTEASSVSSSSVSPA) the chain is Cytoplasmic. 2 S-palmitoyl cysteine lipidation sites follow: C322 and C323. The segment at 330-353 (EEEGASTTSKTEASSVSSSSVSPA) is disordered. Residues 334-353 (ASTTSKTEASSVSSSSVSPA) are compositionally biased toward low complexity.

Belongs to the G-protein coupled receptor 1 family. Opsin subfamily. In terms of processing, phosphorylated on some or all of the serine and threonine residues present in the C-terminal region. Post-translationally, contains one covalently linked retinal chromophore.

Its subcellular location is the membrane. The protein localises to the cell projection. The protein resides in the cilium. It is found in the photoreceptor outer segment. In terms of biological role, photoreceptor required for image-forming vision at low light intensity. While most salt water fish species use retinal as chromophore, most freshwater fish use 3-dehydroretinal, or a mixture of retinal and 3-dehydroretinal. Light-induced isomerization of 11-cis to all-trans retinal triggers a conformational change that activates signaling via G-proteins. Subsequent receptor phosphorylation mediates displacement of the bound G-protein alpha subunit by arrestin and terminates signaling. This chain is Rhodopsin (rho), found in Mugil cephalus (Flathead mullet).